The following is a 316-amino-acid chain: Apolipoprotein E (316 aa).

The first 18 residues, M1 to A18, serve as a signal peptide directing secretion. Repeat copies occupy residues A83 to G104, P105 to G126, A127 to G148, Q149 to L170, R171 to A192, R193 to T214, L215 to R232, and G233 to Q254. The 8 X 22 AA approximate tandem repeats stretch occupies residues A83 to Q254. Positions H161–R171 are LDL and other lipoprotein receptors binding. Position 165 to 168 (L165 to R168) interacts with heparin. The lipid-binding and lipoprotein association stretch occupies residues H213 to M289. A228–L235 is a heparin binding site. Residues N265–Q316 are homooligomerization. The segment at R277–M289 is specificity for association with VLDL.

This sequence belongs to the apolipoprotein A1/A4/E family. As to quaternary structure, homotetramer. May interact with ABCA1; functionally associated with ABCA1 in the biogenesis of HDLs. May interact with APP/A4 amyloid-beta peptide; the interaction is extremely stable in vitro but its physiological significance is unclear. May interact with MAPT. May interact with MAP2. In the cerebrospinal fluid, interacts with secreted SORL1. Interacts with PMEL; this allows the loading of PMEL luminal fragment on ILVs to induce fibril nucleation. Post-translationally, APOE exists as multiple glycosylated and sialylated glycoforms within cells and in plasma. The extent of glycosylation and sialylation are tissue and context specific. In terms of processing, glycated in plasma VLDL. Phosphorylated by FAM20C in the extracellular medium.

It is found in the secreted. Its subcellular location is the extracellular space. It localises to the extracellular matrix. The protein resides in the extracellular vesicle. The protein localises to the endosome. It is found in the multivesicular body. APOE is an apolipoprotein, a protein associating with lipid particles, that mainly functions in lipoprotein-mediated lipid transport between organs via the plasma and interstitial fluids. APOE is a core component of plasma lipoproteins and is involved in their production, conversion and clearance. Apolipoproteins are amphipathic molecules that interact both with lipids of the lipoprotein particle core and the aqueous environment of the plasma. As such, APOE associates with chylomicrons, chylomicron remnants, very low density lipoproteins (VLDL) and intermediate density lipoproteins (IDL) but shows a preferential binding to high-density lipoproteins (HDL). It also binds a wide range of cellular receptors including the LDL receptor/LDLR and the very low-density lipoprotein receptor/VLDLR that mediate the cellular uptake of the APOE-containing lipoprotein particles. Finally, APOE also has a heparin-binding activity and binds heparan-sulfate proteoglycans on the surface of cells, a property that supports the capture and the receptor-mediated uptake of APOE-containing lipoproteins by cells. The polypeptide is Apolipoprotein E (APOE) (Diceros bicornis (Black rhinoceros)).